The sequence spans 573 residues: Dihydroxy-acid dehydratase (573 aa).

Positions 1 to 14 are enriched in basic and acidic residues; the sequence is MTEKSPKPHKRSDA. The segment at 1–21 is disordered; the sequence is MTEKSPKPHKRSDAITEGPNR. C55 contributes to the [2Fe-2S] cluster binding site. Residue D87 participates in Mg(2+) binding. C128 lines the [2Fe-2S] cluster pocket. Mg(2+)-binding residues include D129 and K130. The residue at position 130 (K130) is an N6-carboxylysine. C200 is a binding site for [2Fe-2S] cluster. E450 contributes to the Mg(2+) binding site. The active-site Proton acceptor is the S476.

Belongs to the IlvD/Edd family. Homodimer. It depends on [2Fe-2S] cluster as a cofactor. The cofactor is Mg(2+).

It catalyses the reaction (2R)-2,3-dihydroxy-3-methylbutanoate = 3-methyl-2-oxobutanoate + H2O. The enzyme catalyses (2R,3R)-2,3-dihydroxy-3-methylpentanoate = (S)-3-methyl-2-oxopentanoate + H2O. Its pathway is amino-acid biosynthesis; L-isoleucine biosynthesis; L-isoleucine from 2-oxobutanoate: step 3/4. It functions in the pathway amino-acid biosynthesis; L-valine biosynthesis; L-valine from pyruvate: step 3/4. Its function is as follows. Functions in the biosynthesis of branched-chain amino acids. Catalyzes the dehydration of (2R,3R)-2,3-dihydroxy-3-methylpentanoate (2,3-dihydroxy-3-methylvalerate) into 2-oxo-3-methylpentanoate (2-oxo-3-methylvalerate) and of (2R)-2,3-dihydroxy-3-methylbutanoate (2,3-dihydroxyisovalerate) into 2-oxo-3-methylbutanoate (2-oxoisovalerate), the penultimate precursor to L-isoleucine and L-valine, respectively. This is Dihydroxy-acid dehydratase from Koribacter versatilis (strain Ellin345).